A 350-amino-acid chain; its full sequence is GDSL esterase/lipase At4g10955 (350 aa).

The protein belongs to the 'GDSL' lipolytic enzyme family.

This Arabidopsis thaliana (Mouse-ear cress) protein is GDSL esterase/lipase At4g10955.